The following is a 60-amino-acid chain: Small, acid-soluble spore protein H 1 (60 aa).

The segment at 39 to 60 is disordered; that stretch reads IHPLDNPNQKQSVPVASLEEHS.

It belongs to the SspH family.

Its subcellular location is the spore core. This Geobacillus kaustophilus (strain HTA426) protein is Small, acid-soluble spore protein H 1.